A 248-amino-acid polypeptide reads, in one-letter code: Thiol:disulfide interchange protein DsbG (248 aa).

An N-terminal signal peptide occupies residues 1–17 (MLKKILLLALLPAIAFA). Residues C126 and C129 are joined by a disulfide bond.

The protein belongs to the thioredoxin family. DsbC subfamily. Homodimer. Interacts with ErfK, YbiS and YnhG.

The protein resides in the periplasm. Its function is as follows. Involved in disulfide bond formation. DsbG and DsbC are part of a periplasmic reducing system that controls the level of cysteine sulfenylation, and provides reducing equivalents to rescue oxidatively damaged secreted proteins such as ErfK, YbiS and YnhG. Probably also functions as a disulfide isomerase with a narrower substrate specificity than DsbC. DsbG is maintained in a reduced state by DsbD. Displays chaperone activity in both redox states in vitro. This chain is Thiol:disulfide interchange protein DsbG (dsbG), found in Escherichia coli (strain K12).